Here is a 683-residue protein sequence, read N- to C-terminus: Phenoloxidase 3 (683 aa).

A propeptide spanning residues 1–48 is cleaved from the precursor; it reads MADKKNLLLLFDHPTEPVFMDKGGNGTVFDVPDSYVTDRYNQMCKKVQ. Cu cation contacts are provided by His209, His213, and His239. Catalysis depends on Glu351, which acts as the Proton acceptor. An N-linked (GlcNAc...) asparagine glycan is attached at Asn358. Residues His366, His370, and His406 each coordinate Cu cation. N-linked (GlcNAc...) asparagine glycans are attached at residues Asn492 and Asn546. 2 cysteine pairs are disulfide-bonded: Cys574–Cys617 and Cys576–Cys624.

It belongs to the tyrosinase family. The cofactor is Cu(2+). Upon activation, a trypsin type protease cleaves prophenol oxidase to yield the active enzyme.

It localises to the secreted. The enzyme catalyses 2 L-dopa + O2 = 2 L-dopaquinone + 2 H2O. It carries out the reaction L-tyrosine + O2 = L-dopaquinone + H2O. Functionally, this is a copper-containing oxidase that functions in the formation of pigments such as melanins and other polyphenolic compounds. Catalyzes the rate-limiting conversions of tyrosine to DOPA, DOPA to DOPA-quinone and possibly 5,6 dihydroxyindole to indole-5'6 quinone. The polypeptide is Phenoloxidase 3 (PPO3) (Drosophila melanogaster (Fruit fly)).